Here is a 366-residue protein sequence, read N- to C-terminus: tRNA-specific 2-thiouridylase MnmA (366 aa).

ATP is bound by residues 6 to 13 and leucine 32; that span reads AMSGGVDS. The Nucleophile role is filled by cysteine 101. An intrachain disulfide couples cysteine 101 to cysteine 199. ATP is bound at residue glycine 125. The interval 149 to 151 is interaction with tRNA; the sequence is KDQ. Cysteine 199 serves as the catalytic Cysteine persulfide intermediate.

This sequence belongs to the MnmA/TRMU family.

The protein resides in the cytoplasm. It carries out the reaction S-sulfanyl-L-cysteinyl-[protein] + uridine(34) in tRNA + AH2 + ATP = 2-thiouridine(34) in tRNA + L-cysteinyl-[protein] + A + AMP + diphosphate + H(+). Functionally, catalyzes the 2-thiolation of uridine at the wobble position (U34) of tRNA, leading to the formation of s(2)U34. This chain is tRNA-specific 2-thiouridylase MnmA, found in Corynebacterium diphtheriae (strain ATCC 700971 / NCTC 13129 / Biotype gravis).